A 421-amino-acid polypeptide reads, in one-letter code: Thymidine phosphorylase (421 aa).

It belongs to the thymidine/pyrimidine-nucleoside phosphorylase family. As to quaternary structure, homodimer.

It carries out the reaction thymidine + phosphate = 2-deoxy-alpha-D-ribose 1-phosphate + thymine. Its function is as follows. The enzymes which catalyze the reversible phosphorolysis of pyrimidine nucleosides are involved in the degradation of these compounds and in their utilization as carbon and energy sources, or in the rescue of pyrimidine bases for nucleotide synthesis. In Mycoplasma genitalium (strain ATCC 33530 / DSM 19775 / NCTC 10195 / G37) (Mycoplasmoides genitalium), this protein is Thymidine phosphorylase (deoA).